A 32-amino-acid polypeptide reads, in one-letter code: Ribulose bisphosphate carboxylase/oxygenase activase, chloroplastic (32 aa).

Positions 13–32 (FGALREGPPTFEQPAMTIEK) are disordered.

Belongs to the RuBisCO activase family.

It localises to the plastid. The protein localises to the chloroplast stroma. Its function is as follows. Activation of RuBisCO (ribulose-1,5-bisphosphate carboxylase/oxygenase; EC 4.1.1.39) involves the ATP-dependent carboxylation of the epsilon-amino group of lysine leading to a carbamate structure. This Populus euphratica (Euphrates poplar) protein is Ribulose bisphosphate carboxylase/oxygenase activase, chloroplastic.